The sequence spans 407 residues: Tyrosine--tRNA ligase (407 aa).

The 'HIGH' region signature appears at 47-56 (PTAPDLHLGA). The 'KMSKS' region signature appears at 231–235 (KMSKS). Residue K234 coordinates ATP. The 62-residue stretch at 342-403 (PRLSQLLVQV…GKRHFARVAL (62 aa)) folds into the S4 RNA-binding domain.

Belongs to the class-I aminoacyl-tRNA synthetase family. TyrS type 2 subfamily. Homodimer.

It localises to the cytoplasm. The enzyme catalyses tRNA(Tyr) + L-tyrosine + ATP = L-tyrosyl-tRNA(Tyr) + AMP + diphosphate + H(+). Its function is as follows. Catalyzes the attachment of tyrosine to tRNA(Tyr) in a two-step reaction: tyrosine is first activated by ATP to form Tyr-AMP and then transferred to the acceptor end of tRNA(Tyr). This Acidithiobacillus ferrooxidans (Thiobacillus ferrooxidans) protein is Tyrosine--tRNA ligase.